A 559-amino-acid chain; its full sequence is NAD(P)H-quinone oxidoreductase chain 4-2 (559 aa).

Helical transmembrane passes span 5 to 25 (FPWL…IPLI), 35 to 55 (WYAL…FWTN), 86 to 106 (ISMP…FAAW), 114 to 134 (LFYF…VAQD), 136 to 156 (LLLF…VCIW), 168 to 188 (FLLY…GLAF), 207 to 227 (IALE…KLAI), 242 to 262 (SAPV…YGLI), 274 to 294 (VYFA…GGFS), 310 to 330 (VSHM…GISG), 331 to 351 (AMLQ…LAGV), 374 to 394 (VFAL…MSGF), 417 to 437 (VTVF…LSML), and 488 to 508 (VFIA…PKLA).

Belongs to the complex I subunit 4 family.

Its subcellular location is the cellular thylakoid membrane. It carries out the reaction a plastoquinone + NADH + (n+1) H(+)(in) = a plastoquinol + NAD(+) + n H(+)(out). The catalysed reaction is a plastoquinone + NADPH + (n+1) H(+)(in) = a plastoquinol + NADP(+) + n H(+)(out). In terms of biological role, NDH-1 shuttles electrons from NAD(P)H, via FMN and iron-sulfur (Fe-S) centers, to quinones in the respiratory chain. The immediate electron acceptor for the enzyme in this species is believed to be plastoquinone. Couples the redox reaction to proton translocation (for every two electrons transferred, four hydrogen ions are translocated across the cytoplasmic membrane), and thus conserves the redox energy in a proton gradient. The sequence is that of NAD(P)H-quinone oxidoreductase chain 4-2 (ndhD2) from Synechocystis sp. (strain ATCC 27184 / PCC 6803 / Kazusa).